Reading from the N-terminus, the 406-residue chain is MFKSFFPKPGTFFLSAFVWALIAVIFWQAGGGDWVARITGASGQIPISAARFWSLDFLIFYAYYIVCVGLFALFWFIYSPHRWQYWSILGTALIIFVTWFLVEVGVAVNAWYAPFYDLIQTALSSPHKVTIEQFYREVGVFLGIALIAVVISVLNNFFVSHYVFRWRTAMNEYYMANWQQLRHIEGAAQRVQEDTMRFASTLENMGVSFINAIMTLIAFLPVLVTLSAHVPELPIIGHIPYGLVIAAIVWSLMGTGLLAVVGIKLPGLEFKNQRVEAAYRKELVYGEDDATRATPPTVRELFSAVRKNYFRLYFHYMYFNIARILYLQVDNVFGLFLLFPSIVAGTITLGLMTQITNVFGQVRGAFQYLINSWTTLVELMSIYKRLRSFEHELDGDKIQEVTHTLS.

The Periplasmic portion of the chain corresponds to 1–11; it reads MFKSFFPKPGT. A helical transmembrane segment spans residues 12 to 32; it reads FFLSAFVWALIAVIFWQAGGG. Topologically, residues 33 to 56 are cytoplasmic; the sequence is DWVARITGASGQIPISAARFWSLD. A helical transmembrane segment spans residues 57–77; it reads FLIFYAYYIVCVGLFALFWFI. Topologically, residues 78–87 are periplasmic; the sequence is YSPHRWQYWS. A helical transmembrane segment spans residues 88–108; the sequence is ILGTALIIFVTWFLVEVGVAV. Residues 109 to 137 lie on the Cytoplasmic side of the membrane; it reads NAWYAPFYDLIQTALSSPHKVTIEQFYRE. A helical membrane pass occupies residues 138–158; that stretch reads VGVFLGIALIAVVISVLNNFF. Over 159 to 205 the chain is Periplasmic; that stretch reads VSHYVFRWRTAMNEYYMANWQQLRHIEGAAQRVQEDTMRFASTLENM. A helical transmembrane segment spans residues 206–226; the sequence is GVSFINAIMTLIAFLPVLVTL. Topologically, residues 227–242 are cytoplasmic; sequence SAHVPELPIIGHIPYG. A helical transmembrane segment spans residues 243 to 263; sequence LVIAAIVWSLMGTGLLAVVGI. Residues 264-331 lie on the Periplasmic side of the membrane; sequence KLPGLEFKNQ…ARILYLQVDN (68 aa). The helical transmembrane segment at 332–352 threads the bilayer; that stretch reads VFGLFLLFPSIVAGTITLGLM. The Cytoplasmic segment spans residues 353–406; it reads TQITNVFGQVRGAFQYLINSWTTLVELMSIYKRLRSFEHELDGDKIQEVTHTLS.

This sequence belongs to the peptide uptake permease (PUP) (TC 9.A.18) family.

The protein localises to the cell inner membrane. Its function is as follows. Uptake of antimicrobial peptides. The sequence is that of Peptide antibiotic transporter SbmA (sbmA) from Escherichia coli O157:H7.